A 435-amino-acid polypeptide reads, in one-letter code: GTPase Der (435 aa).

EngA-type G domains lie at 3–167 and 176–351; these read NIVA…KDEG and PRIA…ENRG. Residues 9–16, 56–60, 119–122, 182–189, 229–233, and 294–297 contribute to the GTP site; these read GRPNVGKS, DTGGY, NKSD, GRPNAGKS, DTAGI, and NKWD. The KH-like domain maps to 352–435; that stretch reads KRIPTSELND…VPISIVYRKK (84 aa).

Belongs to the TRAFAC class TrmE-Era-EngA-EngB-Septin-like GTPase superfamily. EngA (Der) GTPase family. As to quaternary structure, associates with the 50S ribosomal subunit.

GTPase that plays an essential role in the late steps of ribosome biogenesis. The chain is GTPase Der from Cytophaga hutchinsonii (strain ATCC 33406 / DSM 1761 / CIP 103989 / NBRC 15051 / NCIMB 9469 / D465).